Here is a 2245-residue protein sequence, read N- to C-terminus: Basic helix-loop-helix domain-containing protein USF3 (2245 aa).

Residues 1 to 28 (MPEMTENETPTKKQHRKKNRETHNAVER) are disordered. The 52-residue stretch at 18–69 (KNRETHNAVERHRKKKINAGINRIGELIPCSPALKQSKNMILDQAFKYITEL) folds into the bHLH domain. Residues 77–112 (LLNGGNNEQAEEIKKLRKQLEEIQKENGRYIELLKA) adopt a coiled-coil conformation. Disordered stretches follow at residues 271–290 (LHTC…QENP), 447–470 (SQTP…TSNH), 881–900 (SKSK…VTSE), 906–933 (AAKS…ALSD), 1015–1041 (KNPQ…IVDS), 1164–1238 (PSEA…SITS), 1307–1331 (IPNS…AKRA), 1460–1624 (IKQQ…VSGH), 1636–1664 (LEQQ…ERNR), 1736–1764 (TFKP…GNPV), 1777–1815 (ISQN…ENTC), 1834–1859 (GSQR…YNCP), and 1891–2031 (STLN…QPAT). Residues 273 to 288 (TCLNDQNSSENKNGQE) are compositionally biased toward polar residues. The segment covering 881–896 (SKSKSAEKSSPPSQES) has biased composition (low complexity). Positions 912-925 (STPNLQQETSQDKP) are enriched in polar residues. Polar residues-rich tracts occupy residues 1185 to 1202 (GTGQ…QGSI) and 1219 to 1238 (IKTS…SITS). The segment covering 1319–1331 (PSHESRKDSAKRA) has biased composition (basic and acidic residues). A compositionally biased stretch (low complexity) spans 1462–1478 (QQQQQQQQQQQQQQQQQ). Composition is skewed to polar residues over residues 1501–1520 (SVHS…QEVQ) and 1528–1538 (VQGTQTSQLSL). A compositionally biased stretch (low complexity) spans 1560-1569 (QQMQQQMQQH). Positions 1570–1585 (FGSSQTEKSCENPSTS) are enriched in polar residues. Residues 1593–1624 (QNHLNQDIMHQQQDVGSRQQGSGVSSEHVSGH) show a composition bias toward low complexity. The segment covering 1636–1654 (LEQQMVSQPSIVTRSSDMT) has biased composition (polar residues). Composition is skewed to polar residues over residues 1904 to 1923 (GDIQ…SNPM) and 1998 to 2007 (SGNQRQSTVF).

It localises to the nucleus. Functionally, involved in the negative regulation of epithelial-mesenchymal transition, the process by which epithelial cells lose their polarity and adhesion properties to become mesenchymal cells with enhanced migration and invasive properties. The chain is Basic helix-loop-helix domain-containing protein USF3 from Homo sapiens (Human).